The following is a 377-amino-acid chain: Gap junction gamma-1 protein (377 aa).

Residues 1–18 lie on the Cytoplasmic side of the membrane; sequence MSWSFLTRLLEEINNHST. A helical transmembrane segment spans residues 19-39; the sequence is FVGKIWLTVLIIFRIVLTAVG. Over 40–75 the chain is Extracellular; sequence GESIYYDEQSKFTCNTHQPGCENVCYDAFAPLSHVR. The helical transmembrane segment at 76 to 96 threads the bilayer; the sequence is FWVFQIILITTPSIMYLGFAM. The Cytoplasmic segment spans residues 97–174; it reads HRIARQPDEQ…RRIKQDGLMK (78 aa). A disordered region spans residues 129–163; the sequence is DYEEAEDNQEEDPMICEEEEPEKDSEKGDKKKHDG. Acidic residues predominate over residues 131-151; sequence EEAEDNQEEDPMICEEEEPEK. The helical transmembrane segment at 175 to 197 threads the bilayer; that stretch reads VYVLQLLFRSVFEVGFLMGQYVL. At 198 to 228 the chain is on the extracellular side; that stretch reads YGFEVIPFFVCSRNPCPHTVDCFVSRPTEKT. A helical membrane pass occupies residues 229 to 249; sequence IFLLIMYAVSALCLFLNLCEL. Over 250–377 the chain is Cytoplasmic; it reads FHLGIGGIRD…GVGSREKSGL (128 aa). 2 disordered regions span residues 266–286 and 341–377; these read KEIQESRKKKPSAPPNYHSVL and AHASRSSSPEANSIAAEQNRLNLAQEKGVGSREKSGL. Positions 344 to 362 are enriched in polar residues; sequence SRSSSPEANSIAAEQNRLN.

Belongs to the connexin family. Gamma-type subfamily. As to quaternary structure, a connexon is composed of a hexamer of connexins.

It localises to the cell membrane. The protein resides in the cell junction. It is found in the gap junction. In terms of biological role, one gap junction consists of a cluster of closely packed pairs of transmembrane channels, the connexons, through which materials of low MW diffuse from one cell to a neighboring cell. The protein is Gap junction gamma-1 protein (gjc1) of Xenopus laevis (African clawed frog).